A 418-amino-acid chain; its full sequence is Equilibrative nucleotide transporter 4 (418 aa).

11 helical membrane-spanning segments follow: residues 20–40, 54–74, 85–105, 108–128, 147–169, 186–206, 264–284, 291–311, 326–346, 353–373, and 392–412; these read MVVC…MLTI, SRVF…ILAY, ILTG…LDLT, GHGG…FGLA, LIQS…RLIT, IFLA…AYVF, HAVN…GFLY, GLGD…DLFG, KALT…YFTA, WMIM…VCIM, and LVVF…LWLI.

Belongs to the SLC29A/ENT transporter (TC 2.A.57) family. As to expression, expressed in leaves and at lowe levels in stems and flowers.

Its subcellular location is the cell membrane. Functionally, nucleoside transporter that can mediate uptake of adenosine, uridine, guanosine or cytidine when expressed in a heterologous system (yeast). The chain is Equilibrative nucleotide transporter 4 (ENT4) from Arabidopsis thaliana (Mouse-ear cress).